Here is a 432-residue protein sequence, read N- to C-terminus: MFVDQIKIEVKAGKGGDGMVAFRREKYVPNGGPAGGDGGKGGSIILKVDQGLRTLMDFRYHRIFKAKPGQNGMIKGMYGRGADDTYISVPQGTTVTDAETGELLGDLVEADDELVVAKGGCGGRGNIKFASPKNPAPEIAENGEPGEERKLKLELKVLADVGLVGFPSVGKSTLLSVVTSAKPKIAEYHFTTLVPNLGMVRLDDGRDYVMADLPGLIEGASQGVGLGIQFLRHVERTRVILHLIDMSGVEGRDPYDDFVKINEELKVYDPTLLDRPQIVVASKMDMPDSAKNLAEFKVKLAKDKTLKQVPEVMEISSLTHQGLKELTHRTADVLESTPKFETLAEKEQASKVYTFKEDEPAFKITRDSDATWVLSGEKLERLFKMTNFNHDESLMRFARQLRGMGVDDALRERGVKGGDLVRIEDFTFEFVE.

The Obg domain maps to 1–158; the sequence is MFVDQIKIEV…RKLKLELKVL (158 aa). Residues 159 to 335 form the OBG-type G domain; the sequence is ADVGLVGFPS…LTHRTADVLE (177 aa). Residues 165–172, 190–194, 212–215, 282–285, and 316–318 each bind GTP; these read GFPSVGKS, FTTLV, DLPG, SKMD, and SSL. Mg(2+) is bound by residues S172 and T192. The 79-residue stretch at 354–432 folds into the OCT domain; it reads TFKEDEPAFK…IEDFTFEFVE (79 aa).

Belongs to the TRAFAC class OBG-HflX-like GTPase superfamily. OBG GTPase family. As to quaternary structure, monomer. Requires Mg(2+) as cofactor.

The protein resides in the cytoplasm. An essential GTPase which binds GTP, GDP and possibly (p)ppGpp with moderate affinity, with high nucleotide exchange rates and a fairly low GTP hydrolysis rate. Plays a role in control of the cell cycle, stress response, ribosome biogenesis and in those bacteria that undergo differentiation, in morphogenesis control. The sequence is that of GTPase Obg from Ligilactobacillus salivarius (strain UCC118) (Lactobacillus salivarius).